The primary structure comprises 130 residues: Small ribosomal subunit protein uS9 (130 aa).

The segment at 102 to 130 is disordered; it reads GFLTRDPRKKERKKYGLKKARKSPQFSKR. A compositionally biased stretch (basic residues) spans 111-130; sequence KERKKYGLKKARKSPQFSKR.

The protein belongs to the universal ribosomal protein uS9 family.

This chain is Small ribosomal subunit protein uS9, found in Finegoldia magna (strain ATCC 29328 / DSM 20472 / WAL 2508) (Peptostreptococcus magnus).